Consider the following 660-residue polypeptide: Junctophilin-1 (660 aa).

Residues 1-638 (MTGGRFDFDD…EKEANSGPNS (638 aa)) are Cytoplasmic-facing. MORN repeat units lie at residues 14 to 36 (YCGG…KGQG), 38 to 59 (YSGS…SGNT), 60 to 82 (YQGY…KWMY), 106 to 128 (YEGT…DGGT), and 129 to 151 (YQGQ…PYGM). A phosphoserine mark is found at Ser157, Ser216, and Ser220. Positions 228-247 (SKSSISSKRSSVRSDAAMSR) are disordered. 2 MORN repeats span residues 281–303 (YMGE…NGMK) and 304–326 (YEGE…DGSK). Over residues 437-454 (NPEEKVLEKPPSPKESPH) the composition is skewed to basic and acidic residues. The segment at 437-631 (NPEEKVLEKP…NDTCPSLEKE (195 aa)) is disordered. Ser452 bears the Phosphoserine mark. Position 461 is a phosphothreonine (Thr461). Phosphoserine is present on residues Ser465, Ser469, and Ser475. A compositionally biased stretch (low complexity) spans 466–477 (PESSPKQSHSPQ). Basic and acidic residues-rich tracts occupy residues 562-571 (PPEDREDDRG) and 598-612 (VAKE…KKSE). A helical; Anchor for type IV membrane protein transmembrane segment spans residues 639–659 (IMIVLVMLLNIGLAILFVHFL).

It belongs to the junctophilin family. As to expression, specifically expressed in skeletal muscle. Weakly expressed in embryos and neonates. Abundant in young adult muscles.

The protein resides in the cell membrane. The protein localises to the endoplasmic reticulum membrane. It localises to the sarcoplasmic reticulum membrane. Its function is as follows. Junctophilins contribute to the formation of junctional membrane complexes (JMCs) which link the plasma membrane with the endoplasmic or sarcoplasmic reticulum in excitable cells. Provides a structural foundation for functional cross-talk between the cell surface and intracellular calcium release channels. JPH1 contributes to the construction of the skeletal muscle triad by linking the t-tubule (transverse-tubule) and SR (sarcoplasmic reticulum) membranes. This chain is Junctophilin-1 (Jph1), found in Mus musculus (Mouse).